Here is a 199-residue protein sequence, read N- to C-terminus: Homeobox protein ceh-19 (199 aa).

The segment at 1 to 42 (MAFNIESLLEKKSNPVEEGNDFEEENDSEKNGEEDEEEEEKN) is disordered. A compositionally biased stretch (acidic residues) spans 18–40 (EGNDFEEENDSEKNGEEDEEEEE). A DNA-binding region (homeobox) is located at residues 94–153 (ERKPRQAYSARQLDRLETEFQTDKYLSVNKRIQLSQTLNLTETQIKTWFQNRRTKWKKQL).

Its subcellular location is the nucleus. In terms of biological role, probable transcription factor. Required for MC motor neuron differentiation and function, including role in modulating pharyngeal pumping. Regulates gene expression of FMRFamide-like neuropeptide flp-2 in MC motor neurons. May act downstream of transcription factor pha-4. The polypeptide is Homeobox protein ceh-19 (ceh-19) (Caenorhabditis elegans).